The primary structure comprises 138 residues: Small ribosomal subunit protein uS12 (138 aa).

Residue D89 is modified to 3-methylthioaspartic acid. Residues 101–138 form a disordered region; that stretch reads ALDTAGTQNRNQGRSKYGTKRPKKGAATAAKGPVKGKK. The span at 105–114 shows a compositional bias: polar residues; it reads AGTQNRNQGR. A compositionally biased stretch (low complexity) spans 125–138; it reads GAATAAKGPVKGKK.

Belongs to the universal ribosomal protein uS12 family. Part of the 30S ribosomal subunit. Contacts proteins S8 and S17. May interact with IF1 in the 30S initiation complex.

In terms of biological role, with S4 and S5 plays an important role in translational accuracy. Interacts with and stabilizes bases of the 16S rRNA that are involved in tRNA selection in the A site and with the mRNA backbone. Located at the interface of the 30S and 50S subunits, it traverses the body of the 30S subunit contacting proteins on the other side and probably holding the rRNA structure together. The combined cluster of proteins S8, S12 and S17 appears to hold together the shoulder and platform of the 30S subunit. This chain is Small ribosomal subunit protein uS12, found in Heliobacterium modesticaldum (strain ATCC 51547 / Ice1).